A 418-amino-acid polypeptide reads, in one-letter code: MKQVISSFLCRPRFVGSAIWLLPVALSHAAEAPPFPNLLQQSLALAPAMVAQAANVRAAGADAAQAQAWLNPRIDTVLENLGAPSSDGLSQRQNTYSITQPFELGGKRGARIEVGERNFAAAQARERQAQVAYAAELAVAYATAEAALGRKILATENLARANEELAAARALVDSGKEASLRSAQAKASVAAAQAAEAAATNDATQALARLSAMSGASEPYTAVTSSLLTTQAVVPNAPAALAESPSVRAAEAERNALDAQVDVERKRWIPDVGVSAGVRRYGWTNSSGYVVGVTASIPLFDQNRNGINAAVERVAAAQARLDSVRLEANVARQSAISQVATADKQLAAASEGEQAAAEAYRMGRIGYESGKTPLMELLAVRRALVDARQLTIDARLARVRALAALAQADGRLAFEESR.

Residues 1 to 29 (MKQVISSFLCRPRFVGSAIWLLPVALSHA) form the signal peptide.

It belongs to the outer membrane factor (OMF) (TC 1.B.17) family.

Functionally, the products of the genes cnrA, cnrB, and cnrC are likely to form a membrane-bound protein complex catalyzing an energy-dependent efflux of Ni(2+) and Co(2+). The mechanism of action of the CnrCBA complex may be that of a proton/cation antiporter. The sequence is that of Nickel and cobalt resistance protein CnrC (cnrC) from Cupriavidus metallidurans (strain ATCC 43123 / DSM 2839 / NBRC 102507 / CH34) (Ralstonia metallidurans).